The following is a 337-amino-acid chain: Cytoskeleton protein RodZ (337 aa).

The Cytoplasmic segment spans residues 1–111; it reads MNTEATHDQN…LGKRRKKRDG (111 aa). The region spanning 19 to 71 is the HTH cro/C1-type domain; the sequence is LRNAREQLGLSQQAVAERLCLKVSTVRDIEEDKAPADLASTFLRGYIRSYARL. Positions 30-49 form a DNA-binding region, H-T-H motif; sequence QQAVAERLCLKVSTVRDIEE. The helical; Signal-anchor for type II membrane protein transmembrane segment at 112–132 threads the bilayer; that stretch reads WLMTFTWLVLFVVIGLSGAWW. At 133 to 337 the chain is on the periplasmic side; the sequence is WQDHKAQQEE…TLNAEQSPAQ (205 aa). Positions 145–167 are enriched in polar residues; the sequence is TMADQSSAELSSNSEQGQSVPLN. Positions 145–218 are disordered; the sequence is TMADQSSAEL…AVVSPSQANV (74 aa). Low complexity predominate over residues 168 to 207; the sequence is TSTTTDPATTSTPPASVDTTATNTQTPAVTAPAPAVDPQQ. The segment covering 208–218 has biased composition (polar residues); it reads NAVVSPSQANV.

The protein belongs to the RodZ family.

The protein resides in the cell inner membrane. Functionally, cytoskeletal protein that is involved in cell-shape control through regulation of the length of the long axis. The chain is Cytoskeleton protein RodZ from Shigella dysenteriae serotype 1 (strain Sd197).